A 96-amino-acid polypeptide reads, in one-letter code: uncharacterized protein (96 aa).

Helical transmembrane passes span 27-47 and 50-70; these read LAFR…ALLI and LSGV…SIVF.

It localises to the cell membrane. This is an uncharacterized protein from Haemophilus influenzae (strain ATCC 51907 / DSM 11121 / KW20 / Rd).